The chain runs to 536 residues: Heparanase-like protein 3 (536 aa).

A signal peptide spans 1-24; the sequence is MAYRQILAIVLFLCVFQFLDCTVS. 4 N-linked (GlcNAc...) asparagine glycosylation sites follow: asparagine 30, asparagine 122, asparagine 176, and asparagine 191. The Proton donor role is filled by glutamate 202. N-linked (GlcNAc...) asparagine glycosylation is found at asparagine 265 and asparagine 308. The Nucleophile role is filled by glutamate 319. N-linked (GlcNAc...) asparagine glycosylation is found at asparagine 370, asparagine 427, asparagine 438, and asparagine 510.

Belongs to the glycosyl hydrolase 79 family.

It is found in the lysosome membrane. The protein resides in the secreted. Its function is as follows. Endoglycosidase which is a cell surface and extracellular matrix-degrading enzyme. Cleaves heparan sulfate proteoglycans (HSPGs) into heparan sulfate side chains and core proteoglycans. The sequence is that of Heparanase-like protein 3 from Arabidopsis thaliana (Mouse-ear cress).